The chain runs to 319 residues: ATP-dependent 6-phosphofructokinase (319 aa).

Glycine 11 serves as a coordination point for ATP. 21-25 serves as a coordination point for ADP; the sequence is RAVVR. ATP is bound by residues 72–73 and 102–105; these read RC and GDGS. Aspartate 103 is a Mg(2+) binding site. 125–127 provides a ligand contact to substrate; that stretch reads TID. Aspartate 127 serves as the catalytic Proton acceptor. ADP is bound at residue arginine 154. Residues arginine 162 and 169–171 each bind substrate; that span reads MGR. Residues 185–187, arginine 211, and 213–215 each bind ADP; these read GAE and KKH. Substrate contacts are provided by residues glutamate 222, arginine 243, and 249-252; that span reads HIQR.

This sequence belongs to the phosphofructokinase type A (PFKA) family. ATP-dependent PFK group I subfamily. Prokaryotic clade 'B1' sub-subfamily. As to quaternary structure, homotetramer. Component of a possible RNA degradosome complex composed of rny, rnjA, rnjB, pnp, pfkA and eno (although rnjA and rnjB's presence is unclear). Specifically interacts with RNase Y (rny, PubMed:21803996) and enolase (eno, PubMed:22198292). Interacts with BrxC. Requires Mg(2+) as cofactor.

The protein resides in the cytoplasm. The enzyme catalyses beta-D-fructose 6-phosphate + ATP = beta-D-fructose 1,6-bisphosphate + ADP + H(+). It functions in the pathway carbohydrate degradation; glycolysis; D-glyceraldehyde 3-phosphate and glycerone phosphate from D-glucose: step 3/4. With respect to regulation, allosterically activated by ADP and other diphosphonucleosides, and allosterically inhibited by phosphoenolpyruvate. Functionally, catalyzes the phosphorylation of D-fructose 6-phosphate to fructose 1,6-bisphosphate by ATP, the first committing step of glycolysis. The protein is ATP-dependent 6-phosphofructokinase of Bacillus subtilis (strain 168).